The sequence spans 386 residues: S-adenosylmethionine synthase (386 aa).

His-17 contributes to the ATP binding site. A Mg(2+)-binding site is contributed by Asp-19. Residue Glu-45 participates in K(+) binding. Glu-58 and Gln-101 together coordinate L-methionine. Residues 101-111 (QSPDISQGVTE) form a flexible loop region. Residues 168 to 170 (DAK), Asp-242, 248 to 249 (RK), Ala-265, and Lys-269 contribute to the ATP site. Asp-242 is a binding site for L-methionine. Lys-273 provides a ligand contact to L-methionine.

The protein belongs to the AdoMet synthase family. In terms of assembly, homotetramer; dimer of dimers. The cofactor is Mg(2+). K(+) serves as cofactor.

Its subcellular location is the cytoplasm. The enzyme catalyses L-methionine + ATP + H2O = S-adenosyl-L-methionine + phosphate + diphosphate. The protein operates within amino-acid biosynthesis; S-adenosyl-L-methionine biosynthesis; S-adenosyl-L-methionine from L-methionine: step 1/1. Catalyzes the formation of S-adenosylmethionine (AdoMet) from methionine and ATP. The overall synthetic reaction is composed of two sequential steps, AdoMet formation and the subsequent tripolyphosphate hydrolysis which occurs prior to release of AdoMet from the enzyme. The protein is S-adenosylmethionine synthase of Leptospira borgpetersenii serovar Hardjo-bovis (strain JB197).